Consider the following 638-residue polypeptide: MFGSSRYLGSSEQPRANSLGPSDRTLVLCSLVEGEDKVNPSEPHGLRMEEKWLLKGKLRNQRNQNKLLSPNKKQRKNHTSKLQELALLLPIALKTGTKKLTKKEILVHVLQYIQYLQRNIDAAKALFKCHITTGEGGLAGLGQKPAWGPARRRRHSTPSSSPSSQKSCLQGACQKPRKKKLTQASESQTRTPKPRRSLALNKPEKLVAPSPDQKGSGTGGTTTPPRCPDSCGHPRPASSSPPGDRKGGQSQLTLLDLAEDTIHCDISSCWCQGSVQDDAPFPALLAQEDVARIHFLNKTQPHPRQKLVFYDSSEDVDKGSLDADPWLPAWTPENSPQGSPLFLGPPQIDVWSGTGHPSEILGLSPSLFSSPGKLLPDEILEDDMEYLTQAAFFEEVCLDLESSPSAYTQEAPQEKDTASKAPKDPPESHSLHRSSVSLDHCYLSLSGNSKAPSSSSSSSSSSSSSEDSDSEPLWKQREDMQANPVGTPGSSEEDEDTTWTPTRLASPLLAAEKKATKGQVARAPVKPKEKKKGPCPPQMKKKCVNGFIMFCRMNRKQYIRSCPGTASTAATKELAQLWRVMTQQERRPYCTKARRFSRQHNRIVKQDGSSSEAEDWETPKPFYQLLAEKALPLPPHLQ.

Disordered regions lie at residues 1-21 (MFGS…SLGP), 60-79 (NQRN…KNHT), 138-249 (LAGL…KGGQ), 404-433 (PSAY…SLHR), and 447-537 (GNSK…PCPP). The segment covering 7 to 20 (YLGSSEQPRANSLG) has biased composition (polar residues). The tract at residues 62–75 (RNQNKLLSPNKKQR) is basic motif; degenerate. The bHLH domain maps to 62–116 (RNQNKLLSPNKKQRKNHTSKLQELALLLPIALKTGTKKLTKKEILVHVLQYIQYL). Residues 76–116 (KNHTSKLQELALLLPIALKTGTKKLTKKEILVHVLQYIQYL) are helix-loop-helix motif. Low complexity predominate over residues 157-167 (TPSSSPSSQKS). The segment covering 182–191 (TQASESQTRT) has biased composition (polar residues). Residues 412 to 430 (PQEKDTASKAPKDPPESHS) show a composition bias toward basic and acidic residues. Residues 453 to 465 (SSSSSSSSSSSSS) show a composition bias toward low complexity. The segment covering 528–537 (KEKKKGPCPP) has biased composition (basic residues). The HMG box DNA-binding region spans 540 to 608 (KKKCVNGFIM…QHNRIVKQDG (69 aa)).

Interacts with STRA8.

It is found in the nucleus. Functionally, gatekeeper of meiotic initiation in both male and female germ cells. In complex with STRA8, directly activates the transcription of a subset of critical meiotic genes playing a central role in cell-cycle switching from mitosis to meiosis. Temporal expression of MEIOSIN is required for meiotic entry decision. The chain is Meiosis initiator protein from Homo sapiens (Human).